Consider the following 598-residue polypeptide: Elongation factor 4 (598 aa).

Residues 4–181 (KKIRNFAIIA…AIVNLIPPPQ (178 aa)) enclose the tr-type G domain. GTP-binding positions include 16 to 21 (DHGKST) and 128 to 131 (NKID).

The protein belongs to the TRAFAC class translation factor GTPase superfamily. Classic translation factor GTPase family. LepA subfamily.

It is found in the cell membrane. The catalysed reaction is GTP + H2O = GDP + phosphate + H(+). Functionally, required for accurate and efficient protein synthesis under certain stress conditions. May act as a fidelity factor of the translation reaction, by catalyzing a one-codon backward translocation of tRNAs on improperly translocated ribosomes. Back-translocation proceeds from a post-translocation (POST) complex to a pre-translocation (PRE) complex, thus giving elongation factor G a second chance to translocate the tRNAs correctly. Binds to ribosomes in a GTP-dependent manner. The polypeptide is Elongation factor 4 (Mesomycoplasma hyopneumoniae (strain 7448) (Mycoplasma hyopneumoniae)).